The sequence spans 204 residues: MTFKGFSKKDFKTMQIPGLDARMAGIQNDIQPKFKAVGEELTTYLSAKLGDEMFLHIARHQRRSVNPPESTWLAICHDKRGYKKHPHFQVGLFDNYLFIWLAFIYENEESTKIANRFLKEKKLLAELPDTFAISPDHTEEKTYPVHGGQLDATLKRFRDVKKGEFLVGKIYLPDDNHLSPGKDFIKEAEMVLDELIPLYKAALQ.

The protein belongs to the UPF0637 family.

This chain is UPF0637 protein lin1053, found in Listeria innocua serovar 6a (strain ATCC BAA-680 / CLIP 11262).